The following is a 76-amino-acid chain: ATP synthase subunit 9, mitochondrial (76 aa).

2 helical membrane passes run 11 to 31 and 53 to 73; these read IGAG…GIVF and ILGF…AFLI.

Belongs to the ATPase C chain family. F-type ATPases have 2 components, CF(1) - the catalytic core - and CF(0) - the membrane proton channel. CF(1) has five subunits: alpha(3), beta(3), gamma(1), delta(1), epsilon(1). CF(0) has three main subunits: a, b and c.

Its subcellular location is the mitochondrion membrane. In terms of biological role, this protein is one of the chains of the nonenzymatic membrane component (F0) of mitochondrial ATPase. The chain is ATP synthase subunit 9, mitochondrial (ATP9) from Chondrus crispus (Carrageen Irish moss).